A 135-amino-acid polypeptide reads, in one-letter code: C-type lectin Cal (135 aa).

4 cysteine pairs are disulfide-bonded: C3-C14, C31-C131, C38-C133, and C106-C123. One can recognise a C-type lectin domain in the interval M10 to Q132. Residues Q96, D98, E104, N119, and D120 each contribute to the Ca(2+) site. Residues Q96 to D98 carry the Galactose-binding motif.

Belongs to the true venom lectin family. As to quaternary structure, homodecamer of disulfide-linked dimers arranged in two pseudo-5-fold symmetric pentamers. As to expression, expressed by the venom gland.

The protein resides in the secreted. Galactose-binding protein which recognizes specific carbohydrate structures and agglutinates a variety of animal cells by binding to cell-surface glycoproteins and glycolipids. Calcium-dependent lectin. Shows high hemagglutinating activity (MHC=10 ng/ml). This chain is C-type lectin Cal, found in Crotalus atrox (Western diamondback rattlesnake).